The chain runs to 124 residues: Magnetosome protein MamC (124 aa).

The Cytoplasmic segment spans residues 2 to 8; the sequence is PFHLAPY. Residues 9 to 29 traverse the membrane as a helical segment; that stretch reads LAKSVPGVGVLGALVGGAAAL. Residues 30–64 are Lumenal-facing; it reads AKNVRLLKEKRITNTEAAIDTGKETVGAGLATALS. The MIC, when fused with the C-terminus of maltose-binding protein (MBP) or expressed as a fragment, improves quality of iron particles during precipitation experiments, binds magnetite stretch occupies residues 36–56; the sequence is LKEKRITNTEAAIDTGKETVG. The helical transmembrane segment at 65–85 threads the bilayer; sequence AVAATAVGGGLVVSLGTALVA. The Cytoplasmic segment spans residues 86–124; it reads GVAAKYAWDRGVDLVEKELNRGKAANGASDEDILRDELA.

The protein belongs to the magnetosome MamC family. In terms of assembly, probably interacts with MamA.

The protein resides in the magnetosome membrane. Probably involved in magnetite crystal growth. The lumenal domain may bind the magnetite crystals, affecting crystal size and shape. The protein is Magnetosome protein MamC of Paramagnetospirillum magneticum (strain ATCC 700264 / AMB-1) (Magnetospirillum magneticum).